We begin with the raw amino-acid sequence, 359 residues long: Peptide chain release factor 1 (359 aa).

An N5-methylglutamine modification is found at Q236.

The protein belongs to the prokaryotic/mitochondrial release factor family. In terms of processing, methylated by PrmC. Methylation increases the termination efficiency of RF1.

The protein localises to the cytoplasm. Functionally, peptide chain release factor 1 directs the termination of translation in response to the peptide chain termination codons UAG and UAA. The sequence is that of Peptide chain release factor 1 from Streptococcus pyogenes serotype M1.